A 157-amino-acid polypeptide reads, in one-letter code: 6,7-dimethyl-8-ribityllumazine synthase (157 aa).

Residues phenylalanine 23, 57-59 (AFE), and 81-83 (AVI) each bind 5-amino-6-(D-ribitylamino)uracil. 86-87 (ST) lines the (2S)-2-hydroxy-3-oxobutyl phosphate pocket. Histidine 89 (proton donor) is an active-site residue. Phenylalanine 114 serves as a coordination point for 5-amino-6-(D-ribitylamino)uracil. A (2S)-2-hydroxy-3-oxobutyl phosphate-binding site is contributed by arginine 128.

This sequence belongs to the DMRL synthase family.

It catalyses the reaction (2S)-2-hydroxy-3-oxobutyl phosphate + 5-amino-6-(D-ribitylamino)uracil = 6,7-dimethyl-8-(1-D-ribityl)lumazine + phosphate + 2 H2O + H(+). It functions in the pathway cofactor biosynthesis; riboflavin biosynthesis; riboflavin from 2-hydroxy-3-oxobutyl phosphate and 5-amino-6-(D-ribitylamino)uracil: step 1/2. In terms of biological role, catalyzes the formation of 6,7-dimethyl-8-ribityllumazine by condensation of 5-amino-6-(D-ribitylamino)uracil with 3,4-dihydroxy-2-butanone 4-phosphate. This is the penultimate step in the biosynthesis of riboflavin. This chain is 6,7-dimethyl-8-ribityllumazine synthase, found in Desulfosudis oleivorans (strain DSM 6200 / JCM 39069 / Hxd3) (Desulfococcus oleovorans).